A 244-amino-acid polypeptide reads, in one-letter code: Ribosome maturation factor RimM (244 aa).

Residues 1-58 (MSERDSGSSGPVKAKAAAPRAKTSGQAPFGAFVRKPVEKTEGKAKANAANAGSGATEM) form a disordered region. Low complexity predominate over residues 13-22 (KAKAAAPRAK). The segment covering 35–44 (KPVEKTEGKA) has biased composition (basic and acidic residues). Low complexity predominate over residues 45–57 (KANAANAGSGATE). Positions 163–244 (ADEFYWVDLL…QITVDWEADY (82 aa)) constitute a PRC barrel domain.

The protein belongs to the RimM family. Binds ribosomal protein uS19.

The protein resides in the cytoplasm. In terms of biological role, an accessory protein needed during the final step in the assembly of 30S ribosomal subunit, possibly for assembly of the head region. Essential for efficient processing of 16S rRNA. May be needed both before and after RbfA during the maturation of 16S rRNA. It has affinity for free ribosomal 30S subunits but not for 70S ribosomes. The protein is Ribosome maturation factor RimM of Paraburkholderia xenovorans (strain LB400).